A 2497-amino-acid chain; its full sequence is Polyprotein P1234 (2497 aa).

In terms of domain architecture, Alphavirus-like MT spans 28-259 (EAKQVTDNDH…EKRDLLRSWH (232 aa)). The interval 244-263 (GSTIYHEKRDLLRSWHLPSV) is nsP1 membrane-binding. Residue C419 is the site of S-palmitoyl cysteine; by host attachment. The 152-residue stretch at 690–841 (ELVDPPFHEF…HEICTQVFHK (152 aa)) folds into the (+)RNA virus helicase ATP-binding domain. 721-728 (GVPGSGKS) is an a ribonucleoside 5'-triphosphate binding site. Residues 842–990 (SISRRCTKSV…MEEWQAEHDA (149 aa)) enclose the (+)RNA virus helicase C-terminal domain. The 320-residue stretch at 1003–1322 (DVFQNKANVC…STLTNIYTGS (320 aa)) folds into the Peptidase C9 domain. The interval 1004–1023 (VFQNKANVCWAKALVPVLKT) is nucleolus localization signal. The active-site For cysteine protease nsP2 activity is the C1012. The short motif at 1056-1065 (VRFFGLDLDS) is the Nuclear export signal element. H1081 (for cysteine protease nsP2 activity) is an active-site residue. The Nuclear localization signal signature appears at 1179–1183 (SGKTV). The region spanning 1328–1489 (GCAPSYHVVR…TLKEVVARRE (162 aa)) is the Macro domain. The ADP-D-ribose site is built by D1339, N1353, G1361, G1441, I1442, and F1443. The Zn(2+) site is built by C1596, C1598, C1621, and C1639. Disordered stretches follow at residues 1774 to 1806 (IPRP…SVDS) and 1827 to 1865 (APRT…NPPG). A binding to host FXR family members region spans residues 1856–1877 (RSSLASNPPGVNRVITREEFEA). A RdRp catalytic domain is found at 2254 to 2369 (DWVLETDIAS…KGVKSDKLMA (116 aa)).

Interacts with non-structural protein 3. Interacts with RNA-directed RNA polymerase nsP4. Interacts with protease nsP2. interacts with itself. As to quaternary structure, interacts with mRNA-capping enzyme nsP1. Interacts with host DDX1. Interacts with host DDX3. Interacts (via C-terminus) with host FXR1; this interaction inhibits the formation of host stress granules on viral mRNAs and the nsp3-FXR1 complexes bind viral RNAs and probably orchestrate the assembly of viral replication complexes. Interacts (via C-terminus) with host FXR2; this interaction inhibits the formation of host stress granules on viral mRNAs and the nsp3-FXR2 complexes bind viral RNAs and probably orchestrate the assembly of viral replication complexes. Interacts (via C-terminus) with host FMR1; this interaction inhibits the formation of host stress granules on viral mRNAs and the nsp3-FMR1 complexes bind viral RNAs and probably orchestrate the assembly of viral replication complexes. In terms of assembly, interacts with mRNA-capping enzyme nsP1. Interacts with protease nsP2. interacts with itself. Interacts with RNA-directed RNA polymerase nsP4. Interacts with mRNA-capping enzyme nsP1. Interacts with KPNA1/karyopherin-alpha1; this interaction probably allows the active transport of protease nsP2 into the host nucleus. Requires Mg(2+) as cofactor. The cofactor is Mn(2+). Post-translationally, specific enzymatic cleavages in vivo yield mature proteins. The processing of the polyprotein is temporally regulated. In early stages (1.7 hpi), P1234 is first cleaved in trans through its nsP2 protease activity, releasing P123' and nsP4, which associate to form the early replication complex. At the same time, P1234 is also cut at the nsP1/nsP2 site early in infection but with lower efficiency. After replication of the viral minus-strand RNAs (4 hpi), the polyproteins are cut at the nsP1/nsP2 and nsP2/nsP3 sites very efficiently, preventing accumulation of P123' and P1234 and allowing the formation of the late replication complex. NsP3'/nsP4 site is not cleaved anymore and P34 is produced rather than nsP4. Specific enzymatic cleavages in vivo yield mature proteins. The processing of the polyprotein is temporally regulated. In early stages (1.7 hpi), P123 is cleaved at the nsP1/nsP2 site with low efficiency. After replication of the viral minus-strand RNAs (4 hpi), the polyproteins are cut at the nsP1/nsP2 and nsP2/nsP3 sites very efficiently, preventing accumulation of P123 and allowing the formation of the late replication complex. In terms of processing, specific enzymatic cleavages in vivo yield mature proteins. The processing of the polyprotein is temporally regulated. In early stages (1.7 hpi), P123' is cleaved at the nsP1/nsP2 site with low efficiency. After replication of the viral minus-strand RNAs (4 hpi), the polyproteins are cut at the nsP1/nsP2 and nsP2/nsP3 sites very efficiently, preventing accumulation of P123' and allowing the formation of the late replication complex. Post-translationally, palmitoylated by host palmitoyltransferases ZDHHC2 and ZDHHC19. Phosphorylated by host on serines and threonines. In terms of processing, ubiquitinated; targets the protein for rapid degradation via the ubiquitin system. Nsp4 is present in extremely low quantities due to low frequency of translation through the amber stop-codon and the degradation by the ubiquitin pathway.

It is found in the host cytoplasmic vesicle membrane. The protein localises to the host cell membrane. The protein resides in the host cell projection. It localises to the host filopodium. Its subcellular location is the host nucleus. It is found in the host cytoplasm. The enzyme catalyses GTP + S-adenosyl-L-methionine = N(7)-methyl-GTP + S-adenosyl-L-homocysteine. The catalysed reaction is N(7)-methyl-GTP + L-histidyl-[protein] = N(tele)-(N(7)-methylguanosine 5'-phospho)-L-histidyl-[protein] + diphosphate. It carries out the reaction N(tele)-(N(7)-methylguanosine 5'-phospho)-L-histidyl-[protein] + a 5'-end diphospho-(purine-ribonucleoside) in mRNA + H(+) = a 5'-end (N(7)-methyl 5'-triphosphoguanosine)-(purine-ribonucleoside) in mRNA + L-histidyl-[protein]. It catalyses the reaction a 5'-end triphospho-ribonucleoside in mRNA + H2O = a 5'-end diphospho-ribonucleoside in mRNA + phosphate + H(+). The enzyme catalyses a ribonucleoside 5'-triphosphate + H2O = a ribonucleoside 5'-diphosphate + phosphate + H(+). The catalysed reaction is ATP + H2O = ADP + phosphate + H(+). It carries out the reaction RNA(n) + a ribonucleoside 5'-triphosphate = RNA(n+1) + diphosphate. It catalyses the reaction 4-O-(ADP-D-ribosyl)-L-aspartyl-[protein] + H2O = L-aspartyl-[protein] + ADP-D-ribose + H(+). The enzyme catalyses 5-O-(ADP-D-ribosyl)-L-glutamyl-[protein] + H2O = L-glutamyl-[protein] + ADP-D-ribose + H(+). The catalysed reaction is RNA(n) + ATP = RNA(n)-3'-adenine ribonucleotide + diphosphate. It carries out the reaction ADP-alpha-D-ribose 1''-phosphate + H2O = ADP-D-ribose + phosphate. Inhibited by sinefungin. In terms of biological role, inactive precursor of the viral replicase, which is activated by cleavages carried out by the viral protease nsP2. The early replication complex formed by the polyprotein P123 and nsP4 synthesizes the minus-strand RNAs (antigenome). Polyprotein P123 is a short-lived polyprotein that accumulates during early stage of infection. As soon P123 is cleaved into mature proteins, the plus-strand RNAs synthesis begins. Its function is as follows. The early replication complex formed by the polyprotein P123' and nsP4 synthesizes minus-strand RNAs (antigenome). Polyprotein P123' is a short-lived polyprotein that accumulates during early stage of infection. As soon P123' is cleaved into mature proteins, the plus-strand RNAs synthesis begins. Functionally, cytoplasmic capping enzyme that catalyzes two virus-specific reactions: methyltransferase and nsP1 guanylyltransferase. mRNA-capping is necessary since all viral RNAs are synthesized in the cytoplasm, and host capping enzymes are restricted to the nucleus. The enzymatic reaction involves a covalent link between 7-methyl-GMP and nsP1, whereas eukaryotic capping enzymes form a covalent complex only with GMP. NsP1 capping consists in the following reactions: GTP is first methylated into 7-methyl-GMP and then is covalently linked to nsP1 to form the m7GMp-nsP1 complex from which 7-methyl-GMP complex is transferred to the mRNA to create the cap structure. NsP1 is also needed for the initiation of the minus-strand RNAs synthesis. Probably serves as a membrane anchor for the replication complex composed of nsP1-nsP4. Nsp1 is needed for the initiation of the minus-strand RNAs synthesis. Palmitoylated nsP1 is remodeling host cell cytoskeleton, and induces filopodium-like structure formation at the surface of the host cell. In terms of biological role, multifunctional protein whose N-terminus is part of the RNA polymerase complex and displays NTPase, RNA triphosphatase and helicase activities. NTPase and RNA triphosphatase are involved in viral RNA capping and helicase keeps a check on the dsRNA replication intermediates. The C-terminus harbors a protease that specifically cleaves the polyproteins and releases the mature proteins. Required for the shutoff of minus-strand RNAs synthesis. Inhibits host translation to ensure maximal viral gene expression and evade host immune response. Seems to be essential for minus-strand RNAs and subgenomic 26S mRNAs synthesis. Displays mono-ADP-ribosylhydrolase activity. ADP-ribosylation is a post-translational modification that controls various processes of the host cell and the virus probably needs to revert it for optimal viral replication. Binds proteins of FXR family and sequesters them into the viral RNA replication complexes thereby inhibiting the formation of host stress granules on viral mRNAs. The nsp3-FXR complexes bind viral RNAs and probably orchestrate the assembly of viral replication complexes, thanks to the ability of FXR family members to self-assemble and bind DNA. Its function is as follows. Seems to be essential for minus-strand RNAs and subgenomic 26S mRNAs synthesis. Displays mono-ADP-ribosylhydrolase activity. ADP-ribosylation is a post-translational modification that controls various processes of the host cell and the virus probably needs to revert it for optimal viral replication. Binds proteins of FXR family and sequesters them into the viral RNA replication complexes thereby inhibiting the formation of host stress granules on viral mRNAs. The nsp3'-FXR complexes bind viral RNAs and probably orchestrate the assembly of viral replication complexes, thanks to the ability of FXR family members to self-assemble and bind DNA. Functionally, RNA dependent RNA polymerase. Replicates genomic and antigenomic RNA by recognizing replications specific signals. The early replication complex formed by the polyprotein P123 and nsP4 synthesizes minus-strand RNAs. The late replication complex composed of fully processed nsP1-nsP4 is responsible for the production of genomic and subgenomic plus-strand RNAs. The sequence is that of Polyprotein P1234 from Venezuelan equine encephalitis virus (VEEV).